The following is a 461-amino-acid chain: Bifunctional protein GlmU (461 aa).

Positions 1 to 229 (MLKKEINVVI…CKEILGVNNK (229 aa)) are pyrophosphorylase. Residues 11-14 (LAAG), Lys-25, Gln-76, 81-82 (GT), 103-105 (YGD), Gly-140, Glu-154, and Asn-227 each bind UDP-N-acetyl-alpha-D-glucosamine. Asp-105 is a binding site for Mg(2+). Asn-227 provides a ligand contact to Mg(2+). The tract at residues 230–250 (LQLSILEKIFRKKQVNDLLLS) is linker. Positions 251-461 (GVTLKDPNHF…PQKIIKKTDQ (211 aa)) are N-acetyltransferase. UDP-N-acetyl-alpha-D-glucosamine contacts are provided by Arg-333 and Lys-351. His-363 serves as the catalytic Proton acceptor. Residues Tyr-366 and Asn-377 each contribute to the UDP-N-acetyl-alpha-D-glucosamine site. Acetyl-CoA contacts are provided by residues Ala-380, 386-387 (NY), and Ala-423.

The protein in the N-terminal section; belongs to the N-acetylglucosamine-1-phosphate uridyltransferase family. In the C-terminal section; belongs to the transferase hexapeptide repeat family. Homotrimer. Mg(2+) is required as a cofactor.

It localises to the cytoplasm. It carries out the reaction alpha-D-glucosamine 1-phosphate + acetyl-CoA = N-acetyl-alpha-D-glucosamine 1-phosphate + CoA + H(+). It catalyses the reaction N-acetyl-alpha-D-glucosamine 1-phosphate + UTP + H(+) = UDP-N-acetyl-alpha-D-glucosamine + diphosphate. The protein operates within nucleotide-sugar biosynthesis; UDP-N-acetyl-alpha-D-glucosamine biosynthesis; N-acetyl-alpha-D-glucosamine 1-phosphate from alpha-D-glucosamine 6-phosphate (route II): step 2/2. Its pathway is nucleotide-sugar biosynthesis; UDP-N-acetyl-alpha-D-glucosamine biosynthesis; UDP-N-acetyl-alpha-D-glucosamine from N-acetyl-alpha-D-glucosamine 1-phosphate: step 1/1. It participates in bacterial outer membrane biogenesis; LPS lipid A biosynthesis. Its function is as follows. Catalyzes the last two sequential reactions in the de novo biosynthetic pathway for UDP-N-acetylglucosamine (UDP-GlcNAc). The C-terminal domain catalyzes the transfer of acetyl group from acetyl coenzyme A to glucosamine-1-phosphate (GlcN-1-P) to produce N-acetylglucosamine-1-phosphate (GlcNAc-1-P), which is converted into UDP-GlcNAc by the transfer of uridine 5-monophosphate (from uridine 5-triphosphate), a reaction catalyzed by the N-terminal domain. The protein is Bifunctional protein GlmU of Buchnera aphidicola subsp. Schizaphis graminum (strain Sg).